The sequence spans 376 residues: Alcohol dehydrogenase class-3 (376 aa).

An N-acetylserine modification is found at Ser-1. The Zn(2+) site is built by Cys-47, His-69, Cys-99, Cys-102, Cys-105, Cys-113, and Cys-176.

It belongs to the zinc-containing alcohol dehydrogenase family. Class-III subfamily. In terms of assembly, homodimer. Requires Zn(2+) as cofactor. In terms of tissue distribution, liver and gut.

It localises to the cytoplasm. It carries out the reaction a primary alcohol + NAD(+) = an aldehyde + NADH + H(+). It catalyses the reaction a secondary alcohol + NAD(+) = a ketone + NADH + H(+). The enzyme catalyses S-(hydroxymethyl)glutathione + NADP(+) = S-formylglutathione + NADPH + H(+). The catalysed reaction is S-(hydroxymethyl)glutathione + NAD(+) = S-formylglutathione + NADH + H(+). It carries out the reaction S-nitrosoglutathione + NADH + H(+) = S-(hydroxysulfenamide)glutathione + NAD(+). Its function is as follows. Class-III ADH is remarkably ineffective in oxidizing ethanol, but it readily catalyzes the oxidation of long-chain primary alcohols and the oxidation of S-(hydroxymethyl) glutathione. Also acts as a S-nitroso-glutathione reductase by catalyzing the NADH-dependent reduction of S-nitrosoglutathione, thereby regulating protein S-nitrosylation. In Myxine glutinosa (Atlantic hagfish), this protein is Alcohol dehydrogenase class-3.